Reading from the N-terminus, the 94-residue chain is Exodeoxyribonuclease 7 small subunit (94 aa).

The segment at 1–21 (MPRAPNDAPSASATPSATPAS) is disordered.

The protein belongs to the XseB family. In terms of assembly, heterooligomer composed of large and small subunits.

The protein localises to the cytoplasm. The catalysed reaction is Exonucleolytic cleavage in either 5'- to 3'- or 3'- to 5'-direction to yield nucleoside 5'-phosphates.. Functionally, bidirectionally degrades single-stranded DNA into large acid-insoluble oligonucleotides, which are then degraded further into small acid-soluble oligonucleotides. The chain is Exodeoxyribonuclease 7 small subunit from Ralstonia pickettii (strain 12J).